We begin with the raw amino-acid sequence, 101 residues long: MMLEHVLVLSAYLFSIGIYGLITSRNLVRALMCLELILNAVNLNFVTFSDFFDSRQLKGNIFSIFVIAIAAAEAAIGPAIVSAIYRNRKSTRINQSNLLNK.

3 helical membrane passes run 2–22, 32–52, and 61–81; these read MLEHVLVLSAYLFSIGIYGLI, MCLELILNAVNLNFVTFSDFF, and IFSIFVIAIAAAEAAIGPAIV.

Belongs to the complex I subunit 4L family. As to quaternary structure, NDH is composed of at least 16 different subunits, 5 of which are encoded in the nucleus.

It is found in the plastid. The protein localises to the chloroplast thylakoid membrane. The catalysed reaction is a plastoquinone + NADH + (n+1) H(+)(in) = a plastoquinol + NAD(+) + n H(+)(out). The enzyme catalyses a plastoquinone + NADPH + (n+1) H(+)(in) = a plastoquinol + NADP(+) + n H(+)(out). Its function is as follows. NDH shuttles electrons from NAD(P)H:plastoquinone, via FMN and iron-sulfur (Fe-S) centers, to quinones in the photosynthetic chain and possibly in a chloroplast respiratory chain. The immediate electron acceptor for the enzyme in this species is believed to be plastoquinone. Couples the redox reaction to proton translocation, and thus conserves the redox energy in a proton gradient. This is NAD(P)H-quinone oxidoreductase subunit 4L, chloroplastic from Fagopyrum esculentum subsp. ancestrale (Wild buckwheat).